We begin with the raw amino-acid sequence, 465 residues long: Cysteine--tRNA ligase (465 aa).

A Zn(2+)-binding site is contributed by cysteine 27. A 'HIGH' region motif is present at residues 29 to 39; it reads PTVYNFFHIGN. Residues cysteine 207, histidine 232, and glutamate 236 each coordinate Zn(2+). A 'KMSKS' region motif is present at residues 264-268; sequence KMSKS. Residue lysine 267 coordinates ATP.

It belongs to the class-I aminoacyl-tRNA synthetase family. As to quaternary structure, monomer. It depends on Zn(2+) as a cofactor.

The protein resides in the cytoplasm. It carries out the reaction tRNA(Cys) + L-cysteine + ATP = L-cysteinyl-tRNA(Cys) + AMP + diphosphate. This is Cysteine--tRNA ligase from Clostridium botulinum (strain Langeland / NCTC 10281 / Type F).